We begin with the raw amino-acid sequence, 383 residues long: MKENELKNEKSVDVLSFKQLESQKIVLPQDLFRSSFTWFCYEIYKSLAFPIWMLLWLPLSVWWKLSNNCIYPLIVSLLVLFLGPIFVLVICGLSRKRSLSKQLIQFCKEVTENTPSSDPHDWEVVAANLNSYLYENKAWNTRYFFFNAMGCQEAFRTTLLEPFSLKKDEAAKVKSFKDSVPYIEEALGVYFREVEKQWKLFNTEKSWSPVGLEDVQLPKDIHRSKLTWFLKRIFTIYSLPLWLAFLNCICVSQHFCLAFRILCPGLFFLMMVWLFQNMRTTALLVKMEHKMQFLLTIINEQESGANGWDEIARKMNRYLFEKKAWKNEEFFFEGIDCEWFFSHFFYRLLSAKKSMWLLPLNVELWPYIKEAQLSRNEESLMKK.

Over 1–42 the chain is Cytoplasmic; sequence MKENELKNEKSVDVLSFKQLESQKIVLPQDLFRSSFTWFCYE. The helical transmembrane segment at 43–63 threads the bilayer; the sequence is IYKSLAFPIWMLLWLPLSVWW. Over 64–72 the chain is Extracellular; sequence KLSNNCIYP. The helical transmembrane segment at 73-93 threads the bilayer; sequence LIVSLLVLFLGPIFVLVICGL. The Cytoplasmic segment spans residues 94 to 232; sequence SRKRSLSKQL…RSKLTWFLKR (139 aa). Residues 233–253 traverse the membrane as a helical segment; sequence IFTIYSLPLWLAFLNCICVSQ. Residue His254 is a topological domain, extracellular. A helical transmembrane segment spans residues 255–275; that stretch reads FCLAFRILCPGLFFLMMVWLF. Residues 276 to 383 lie on the Cytoplasmic side of the membrane; it reads QNMRTTALLV…SRNEESLMKK (108 aa).

The protein belongs to the DUP/COS family.

The protein localises to the membrane. This chain is Protein COS5 (COS5), found in Saccharomyces cerevisiae (strain ATCC 204508 / S288c) (Baker's yeast).